Here is a 208-residue protein sequence, read N- to C-terminus: MKFVAFARELQGTGASRRLRHGGKVPGIVYGGSGKPTSIELDHNALYHALKKEAFHSSILEMELAGQSEKVVLRALQMHAFKQLVLHVDFQRVDETTRIKKKVPLHFVNEAESQAVKLDKCLINHVVSELEIECLAEKLPEFLTVDLGGLSKGQSLHVDDLKLEASIKVVTHGRKNPVVATVVPIVEEEVIVAAPVEAPAKGKGKGKK.

The protein belongs to the bacterial ribosomal protein bL25 family. CTC subfamily. Part of the 50S ribosomal subunit; part of the 5S rRNA/L5/L18/L25 subcomplex. Contacts the 5S rRNA. Binds to the 5S rRNA independently of L5 and L18.

This is one of the proteins that binds to the 5S RNA in the ribosome where it forms part of the central protuberance. In Leptothrix cholodnii (strain ATCC 51168 / LMG 8142 / SP-6) (Leptothrix discophora (strain SP-6)), this protein is Large ribosomal subunit protein bL25.